The primary structure comprises 312 residues: Glyoxylate/hydroxypyruvate reductase A (312 aa).

Arg227 is an active-site residue. The active-site Proton donor is His275.

Belongs to the D-isomer specific 2-hydroxyacid dehydrogenase family. GhrA subfamily.

It localises to the cytoplasm. The enzyme catalyses glycolate + NADP(+) = glyoxylate + NADPH + H(+). It catalyses the reaction (R)-glycerate + NAD(+) = 3-hydroxypyruvate + NADH + H(+). The catalysed reaction is (R)-glycerate + NADP(+) = 3-hydroxypyruvate + NADPH + H(+). In terms of biological role, catalyzes the NADPH-dependent reduction of glyoxylate and hydroxypyruvate into glycolate and glycerate, respectively. This Citrobacter koseri (strain ATCC BAA-895 / CDC 4225-83 / SGSC4696) protein is Glyoxylate/hydroxypyruvate reductase A.